The sequence spans 205 residues: Protein N-terminal glutamine amidohydrolase (205 aa).

Residues cysteine 20, histidine 74, and aspartate 90 contribute to the active site.

This sequence belongs to the NTAQ1 family. As to quaternary structure, monomer.

The catalysed reaction is N-terminal L-glutaminyl-[protein] + H2O = N-terminal L-glutamyl-[protein] + NH4(+). Functionally, mediates the side-chain deamidation of N-terminal glutamine residues to glutamate, an important step in N-end rule pathway of protein degradation. Conversion of the resulting N-terminal glutamine to glutamate renders the protein susceptible to arginylation, polyubiquitination and degradation as specified by the N-end rule. Does not act on substrates with internal or C-terminal glutamine and does not act on non-glutamine residues in any position. In Drosophila willistoni (Fruit fly), this protein is Protein N-terminal glutamine amidohydrolase (tun).